The chain runs to 100 residues: Urease subunit gamma (100 aa).

This sequence belongs to the urease gamma subunit family. In terms of assembly, heterotrimer of UreA (gamma), UreB (beta) and UreC (alpha) subunits. Three heterotrimers associate to form the active enzyme.

The protein resides in the cytoplasm. It carries out the reaction urea + 2 H2O + H(+) = hydrogencarbonate + 2 NH4(+). It participates in nitrogen metabolism; urea degradation; CO(2) and NH(3) from urea (urease route): step 1/1. This Alkalilimnicola ehrlichii (strain ATCC BAA-1101 / DSM 17681 / MLHE-1) protein is Urease subunit gamma.